Reading from the N-terminus, the 302-residue chain is Protoheme IX farnesyltransferase 2 (302 aa).

9 helical membrane-spanning segments follow: residues 14-34, 36-56, 85-105, 108-128, 133-153, 163-183, 209-229, 230-250, and 264-284; these read IIFG…QGSV, WWLL…GCAI, AALA…WFCT, LATG…SLYM, VYGT…GYCA, AILL…IAIF, IVLY…GGYA, GYGY…MALS, and QVFF…AVDG.

Belongs to the UbiA prenyltransferase family. Protoheme IX farnesyltransferase subfamily.

It localises to the cell inner membrane. It catalyses the reaction heme b + (2E,6E)-farnesyl diphosphate + H2O = Fe(II)-heme o + diphosphate. It participates in porphyrin-containing compound metabolism; heme O biosynthesis; heme O from protoheme: step 1/1. In terms of biological role, converts heme B (protoheme IX) to heme O by substitution of the vinyl group on carbon 2 of heme B porphyrin ring with a hydroxyethyl farnesyl side group. The polypeptide is Protoheme IX farnesyltransferase 2 (Chromobacterium violaceum (strain ATCC 12472 / DSM 30191 / JCM 1249 / CCUG 213 / NBRC 12614 / NCIMB 9131 / NCTC 9757 / MK)).